The following is a 115-amino-acid chain: SPbeta prophage-derived uncharacterized membrane protein YosE (115 aa).

3 consecutive transmembrane segments (helical) span residues 20–42, 58–78, and 95–115; these read IVVGLLIFVEALTMSLIVYYGLN, VHVTLPHAFVIGVLLNVFVKG, and GKSLFHSTFALIVLYVSTLFI.

Its subcellular location is the cell membrane. In Bacillus subtilis (strain 168), this protein is SPbeta prophage-derived uncharacterized membrane protein YosE (yosE).